The primary structure comprises 118 residues: Small ribosomal subunit protein uS13 (118 aa).

Positions 94-118 (GLPVRGQRTKTNARTRKGPRKPIKK) are disordered.

It belongs to the universal ribosomal protein uS13 family. In terms of assembly, part of the 30S ribosomal subunit. Forms a loose heterodimer with protein S19. Forms two bridges to the 50S subunit in the 70S ribosome.

Functionally, located at the top of the head of the 30S subunit, it contacts several helices of the 16S rRNA. In the 70S ribosome it contacts the 23S rRNA (bridge B1a) and protein L5 of the 50S subunit (bridge B1b), connecting the 2 subunits; these bridges are implicated in subunit movement. Contacts the tRNAs in the A and P-sites. This is Small ribosomal subunit protein uS13 from Salmonella paratyphi A (strain ATCC 9150 / SARB42).